The primary structure comprises 290 residues: F-box protein PP2-A13 (290 aa).

The F-box domain maps to 21 to 67 (RKLRLVDLPENCVALIMTRLDPPEICRLARLNRMFRRASSADFIWES).

Part of a SCF (ASK-cullin-F-box) protein ligase complex. Interacts with SKP1A/ASK1, SKP1B/ASK2, ASK5, ASK11 and ASK13.

The protein localises to the nucleus. The protein operates within protein modification; protein ubiquitination. Component of SCF(ASK-cullin-F-box) E3 ubiquitin ligase complexes, which may mediate the ubiquitination and subsequent proteasomal degradation of target proteins. The sequence is that of F-box protein PP2-A13 (PP2A13) from Arabidopsis thaliana (Mouse-ear cress).